Here is a 425-residue protein sequence, read N- to C-terminus: Histidine--tRNA ligase (425 aa).

The protein belongs to the class-II aminoacyl-tRNA synthetase family. In terms of assembly, homodimer.

Its subcellular location is the cytoplasm. It carries out the reaction tRNA(His) + L-histidine + ATP = L-histidyl-tRNA(His) + AMP + diphosphate + H(+). The polypeptide is Histidine--tRNA ligase (Listeria monocytogenes serovar 1/2a (strain ATCC BAA-679 / EGD-e)).